Here is a 1151-residue protein sequence, read N- to C-terminus: UDP-N-acetylglucosamine--peptide N-acetylglucosaminyltransferase (1151 aa).

12 TPR repeats span residues 125-158 (LKKV…DPNN), 193-226 (AEAY…KPEF), 227-260 (IDAY…NPDL), 261-294 (YCVR…QPQF), 295-328 (AVAW…DPNF), 329-362 (LDAY…SGNH), 363-396 (AVVH…QPHF), 397-430 (PDAY…CPTH), 431-464 (ADSQ…YPEF), 465-498 (AAAH…APTF), 499-532 (ADAY…NPAF), and 533-566 (ADAH…KPDF). A TPR 13; truncated repeat occupies 567 to 577 (PDAYCNLAHCH). Positions 591-607 (RKLVQIVEDQLCKKRLP) match the Nuclear localization signal motif. Histidine 612 serves as the catalytic Proton acceptor. Residues glutamine 954, lysine 957, 1010 to 1013 (VAAK), 1016 to 1019 (HVRR), 1034 to 1036 (GHT), and aspartate 1040 each bind UDP.

This sequence belongs to the glycosyltransferase 41 family. O-GlcNAc transferase subfamily.

Its subcellular location is the nucleus. It is found in the cytoplasm. The protein resides in the perinuclear region. The catalysed reaction is L-seryl-[protein] + UDP-N-acetyl-alpha-D-glucosamine = 3-O-(N-acetyl-beta-D-glucosaminyl)-L-seryl-[protein] + UDP + H(+). It catalyses the reaction L-threonyl-[protein] + UDP-N-acetyl-alpha-D-glucosamine = 3-O-(N-acetyl-beta-D-glucosaminyl)-L-threonyl-[protein] + UDP + H(+). It participates in protein modification; protein glycosylation. In terms of biological role, addition of nucleotide-activated sugars directly onto the polypeptide through O-glycosidic linkage with the hydroxyl of serine or threonine. Influences tap habituation in the mechanosensory neurons cell autonomously. In Caenorhabditis elegans, this protein is UDP-N-acetylglucosamine--peptide N-acetylglucosaminyltransferase (ogt-1).